We begin with the raw amino-acid sequence, 421 residues long: MISIELIRKNPEYVKENLAKRDMFLKDRIDDILKLDEERRHKIKRIEDLRALRNAKSKEIGSLKKQGLNTESLEEEIRLIKEEISKLEEELARIEKYTEDLLLRVPNLLHESVPYGKDENDNVEIKRWGEIPKFDFGIKDHADLGVLRGFIDFDQATAISGSRFSILKGPLAKLERALINFMLEINAKNGYQEMIVPHLVKPQTLVGTGQLPKFQEELYYVKDDDLYLIPTAEVPLVNVFKDTILKEDDLPINLTAYTPCYRREAGSHGKDVKGLIRQHQFDKVELVKIVHPDSSYDELERLLSNAEEILQLLELPYRVVALCSGDIGFSASKTYDIEVWIPSQNKYREISSCSNCEDFQARRANMRFKDKTGKNRFVHTLNGSSLAVGRTLVAIMENYQTKDHKIRIPKVLKDYIKGECI.

231–233 contributes to the L-serine binding site; the sequence is TAE. 262–264 provides a ligand contact to ATP; sequence RRE. Glu-285 provides a ligand contact to L-serine. 349–352 contributes to the ATP binding site; it reads EISS. Ser-384 serves as a coordination point for L-serine.

It belongs to the class-II aminoacyl-tRNA synthetase family. Type-1 seryl-tRNA synthetase subfamily. In terms of assembly, homodimer. The tRNA molecule binds across the dimer.

It localises to the cytoplasm. The catalysed reaction is tRNA(Ser) + L-serine + ATP = L-seryl-tRNA(Ser) + AMP + diphosphate + H(+). It carries out the reaction tRNA(Sec) + L-serine + ATP = L-seryl-tRNA(Sec) + AMP + diphosphate + H(+). It functions in the pathway aminoacyl-tRNA biosynthesis; selenocysteinyl-tRNA(Sec) biosynthesis; L-seryl-tRNA(Sec) from L-serine and tRNA(Sec): step 1/1. Its function is as follows. Catalyzes the attachment of serine to tRNA(Ser). Is also able to aminoacylate tRNA(Sec) with serine, to form the misacylated tRNA L-seryl-tRNA(Sec), which will be further converted into selenocysteinyl-tRNA(Sec). The protein is Serine--tRNA ligase of Hydrogenobaculum sp. (strain Y04AAS1).